A 67-amino-acid chain; its full sequence is Conotoxin AbVIN (67 aa).

The N-terminal stretch at 1-17 is a signal peptide; sequence VIIIAVLFLTACQLIAT. A propeptide spanning residues 18–40 is cleaved from the precursor; that stretch reads ASYARSERKHPDLRLSSRNSKLS. 3 cysteine pairs are disulfide-bonded: cysteine 43/cysteine 57, cysteine 50/cysteine 61, and cysteine 56/cysteine 66.

Belongs to the conotoxin O1 superfamily. Expressed by the venom duct.

The protein localises to the secreted. This is Conotoxin AbVIN from Conus abbreviatus (Abbreviated cone).